Here is a 343-residue protein sequence, read N- to C-terminus: N-acetyl-gamma-glutamyl-phosphate reductase (343 aa).

The active site involves Cys-149.

It belongs to the NAGSA dehydrogenase family. Type 1 subfamily.

The protein localises to the cytoplasm. It carries out the reaction N-acetyl-L-glutamate 5-semialdehyde + phosphate + NADP(+) = N-acetyl-L-glutamyl 5-phosphate + NADPH + H(+). It functions in the pathway amino-acid biosynthesis; L-arginine biosynthesis; N(2)-acetyl-L-ornithine from L-glutamate: step 3/4. Its function is as follows. Catalyzes the NADPH-dependent reduction of N-acetyl-5-glutamyl phosphate to yield N-acetyl-L-glutamate 5-semialdehyde. This is N-acetyl-gamma-glutamyl-phosphate reductase from Methanococcus maripaludis (strain C5 / ATCC BAA-1333).